Reading from the N-terminus, the 306-residue chain is MVLSSELLTSILDEVRPLLGQGKVADYIPALAQVPADRLGIAVCTVEGELFTAGDASEPFSIQSISKALSLTLALTLYQEEEIWARVGKEPSGQPFNSLVQLEFEQGIPRNPFINAGALVVSDLLETRLTAPRQRTLELVRRLSGNPAIMADQVVARSEYQHSARNAAIAYLMKAYGNFENEVDKVLQSYFNACAIRMSCVDLARAFIYLANRGVPLGATTPLLPARTTKQVNALLATCGLYDEAGDFAYRVGMPGKSGVGGGIIALIPGELCVCVWSPELNKAGNSLAGTAALELLAERLGRSIF.

The substrate site is built by Ser64, Asn115, Glu159, Asn166, Tyr190, Tyr242, and Val260.

Belongs to the glutaminase family. As to quaternary structure, homotetramer.

It catalyses the reaction L-glutamine + H2O = L-glutamate + NH4(+). This Aeromonas hydrophila subsp. hydrophila (strain ATCC 7966 / DSM 30187 / BCRC 13018 / CCUG 14551 / JCM 1027 / KCTC 2358 / NCIMB 9240 / NCTC 8049) protein is Glutaminase.